Reading from the N-terminus, the 32-residue chain is Cypmaclein (32 aa).

This sequence belongs to the GASA family. In terms of tissue distribution, expressed in pollen (at protein level).

This is Cypmaclein from Cupressus sempervirens (Italian cypress).